Consider the following 459-residue polypeptide: MTDLMTSCALPLTGDAGTVASMRRGACPSLAEPMQTGDGLLVRVRPTDDSLTLPKVIALATAAERFGNGIIEITARGNLQLRGLSAASVPRLAQAIGDAEIAIAEGLAIEVPPLAGIDPDEIADPRPIATELREALDVRQVPLKLAPKLSVVIDSGGRFGLGAVVADIRLQAVSTVAGVAWVLSLGGTSTKASSVGTLAGNAVVPALITILEKLASLGTTMRGRDLDPSEIRALCRCETSSERPAAPRSAAIPGIHALGNADTVLGLGLAFAQVEAAALASYLHQVQALGANAIRLAPGHAFFVLGLCPETAAVAQSLAASHGFRIAEQDPRNAIATCAGSKGCASAWMETKGMAERLVETAPELLDGSLTVHLSGCAKGCARPKPSELTLVGAPSGYGLVVNGAANGLPSAYTDENGMGSALARLGRLVRQNKDAGESAQSCLTRLGAARVSAAFEQG.

Residues C338, C344, C377, and C381 each contribute to the [4Fe-4S] cluster site. Siroheme is bound at residue C381.

It belongs to the nitrite and sulfite reductase 4Fe-4S domain family.

The enzyme catalyses precorrin-3A + NADH + O2 + 2 H(+) = precorrin-3B + NAD(+) + H2O. It participates in cofactor biosynthesis; adenosylcobalamin biosynthesis; cob(II)yrinate a,c-diamide from precorrin-2 (aerobic route): step 2/10. Its function is as follows. Catalyzes the elimination of C-20 in precorrin-3A to form precorrin-3B. The protein is Precorrin-3B synthase (cobG) of Sinorhizobium sp.